The sequence spans 207 residues: NADH-quinone oxidoreductase subunit A (207 aa).

The next 3 membrane-spanning stretches (helical) occupy residues 6-26 (WSAI…LVVP), 62-82 (LVAI…AYAV), and 87-107 (AGWL…IGLV).

The protein belongs to the complex I subunit 3 family. As to quaternary structure, NDH-1 is composed of 14 different subunits. Subunits NuoA, H, J, K, L, M, N constitute the membrane sector of the complex.

Its subcellular location is the cell inner membrane. It catalyses the reaction a quinone + NADH + 5 H(+)(in) = a quinol + NAD(+) + 4 H(+)(out). Its function is as follows. NDH-1 shuttles electrons from NADH, via FMN and iron-sulfur (Fe-S) centers, to quinones in the respiratory chain. The immediate electron acceptor for the enzyme in this species is believed to be ubiquinone. Couples the redox reaction to proton translocation (for every two electrons transferred, four hydrogen ions are translocated across the cytoplasmic membrane), and thus conserves the redox energy in a proton gradient. This chain is NADH-quinone oxidoreductase subunit A, found in Psychrobacter arcticus (strain DSM 17307 / VKM B-2377 / 273-4).